A 46-amino-acid polypeptide reads, in one-letter code: Cystatin WCPI-3 (46 aa).

A Secondary area of contact motif is present at residues 35 to 38 (VVAG).

The protein belongs to the cystatin family. Phytocystatin subfamily.

In terms of biological role, inhibitor of papain. The protein is Cystatin WCPI-3 of Wisteria floribunda (Japanese wisteria).